A 335-amino-acid polypeptide reads, in one-letter code: Glycerol-3-phosphate dehydrogenase [NAD(P)+] (335 aa).

3 residues coordinate NADPH: serine 12, tryptophan 13, and lysine 107. Residues lysine 107, glycine 138, and serine 140 each contribute to the sn-glycerol 3-phosphate site. Alanine 142 is an NADPH binding site. Sn-glycerol 3-phosphate contacts are provided by lysine 193, aspartate 246, serine 256, arginine 257, and asparagine 258. Lysine 193 (proton acceptor) is an active-site residue. Arginine 257 contributes to the NADPH binding site. NADPH contacts are provided by valine 281 and glutamate 283.

It belongs to the NAD-dependent glycerol-3-phosphate dehydrogenase family.

It localises to the cytoplasm. It carries out the reaction sn-glycerol 3-phosphate + NAD(+) = dihydroxyacetone phosphate + NADH + H(+). It catalyses the reaction sn-glycerol 3-phosphate + NADP(+) = dihydroxyacetone phosphate + NADPH + H(+). The protein operates within membrane lipid metabolism; glycerophospholipid metabolism. Functionally, catalyzes the reduction of the glycolytic intermediate dihydroxyacetone phosphate (DHAP) to sn-glycerol 3-phosphate (G3P), the key precursor for phospholipid synthesis. The chain is Glycerol-3-phosphate dehydrogenase [NAD(P)+] from Geobacter sp. (strain M21).